Here is a 326-residue protein sequence, read N- to C-terminus: Diphthine methyltransferase (326 aa).

4 WD repeats span residues 65 to 105, 113 to 152, 155 to 195, and 293 to 326; these read MHCD…ELMF, DSSV…IKNK, EHDY…SCIW, and EHES…WEDI.

The protein belongs to the DPH7 family.

The protein localises to the cytoplasm. Its subcellular location is the nucleus. It catalyses the reaction diphthine methyl ester-[translation elongation factor 2] + H2O = diphthine-[translation elongation factor 2] + methanol + H(+). It participates in protein modification; peptidyl-diphthamide biosynthesis. Catalyzes the demethylation of diphthine methyl ester to form diphthine, an intermediate in diphthamide biosynthesis, a post-translational modification of histidine which occurs in translation elongation factor 2 (eft201 and eft202). In Schizosaccharomyces pombe (strain 972 / ATCC 24843) (Fission yeast), this protein is Diphthine methyltransferase (rrt2).